The primary structure comprises 109 residues: Large ribosomal subunit protein eL30 (109 aa).

This sequence belongs to the eukaryotic ribosomal protein eL30 family. Component of the large ribosomal subunit (LSU). Mature N.crassa ribosomes consist of a small (40S) and a large (60S) subunit. The 40S small subunit contains 1 molecule of ribosomal RNA (18S rRNA) and at least 32 different proteins. The large 60S subunit contains 3 rRNA molecules (26S, 5.8S and 5S rRNA) and at least 42 different proteins.

The protein localises to the cytoplasm. Functionally, component of the ribosome, a large ribonucleoprotein complex responsible for the synthesis of proteins in the cell. The small ribosomal subunit (SSU) binds messenger RNAs (mRNAs) and translates the encoded message by selecting cognate aminoacyl-transfer RNA (tRNA) molecules. The large subunit (LSU) contains the ribosomal catalytic site termed the peptidyl transferase center (PTC), which catalyzes the formation of peptide bonds, thereby polymerizing the amino acids delivered by tRNAs into a polypeptide chain. The nascent polypeptides leave the ribosome through a tunnel in the LSU and interact with protein factors that function in enzymatic processing, targeting, and the membrane insertion of nascent chains at the exit of the ribosomal tunnel. The chain is Large ribosomal subunit protein eL30 (rpl-30) from Neurospora crassa (strain ATCC 24698 / 74-OR23-1A / CBS 708.71 / DSM 1257 / FGSC 987).